Consider the following 274-residue polypeptide: Shikimate dehydrogenase (NADP(+)) (274 aa).

Shikimate is bound by residues 14-16 and Thr61; that span reads SLS. Lys65 acts as the Proton acceptor in catalysis. 2 residues coordinate shikimate: Asn85 and Asp106. NADP(+)-binding positions include 130 to 134, 153 to 158, and Ala217; these read GAGGA and NRTAER. Tyr219 is a binding site for shikimate. Residue Gly240 participates in NADP(+) binding.

Belongs to the shikimate dehydrogenase family. In terms of assembly, homodimer.

The catalysed reaction is shikimate + NADP(+) = 3-dehydroshikimate + NADPH + H(+). It participates in metabolic intermediate biosynthesis; chorismate biosynthesis; chorismate from D-erythrose 4-phosphate and phosphoenolpyruvate: step 4/7. In terms of biological role, involved in the biosynthesis of the chorismate, which leads to the biosynthesis of aromatic amino acids. Catalyzes the reversible NADPH linked reduction of 3-dehydroshikimate (DHSA) to yield shikimate (SA). The chain is Shikimate dehydrogenase (NADP(+)) from Halorubrum lacusprofundi (strain ATCC 49239 / DSM 5036 / JCM 8891 / ACAM 34).